The following is a 550-amino-acid chain: M-phase inducer phosphatase 1-B (550 aa).

2 disordered regions span residues asparagine 76–glutamate 98 and serine 285–glycine 335. The segment covering glutamate 290–valine 310 has biased composition (basic and acidic residues). Residues leucine 322–glycine 335 show a composition bias toward polar residues. The Rhodanese domain maps to leucine 401 to glutamate 508. Residue cysteine 457 is part of the active site.

It belongs to the MPI phosphatase family.

It carries out the reaction O-phospho-L-tyrosyl-[protein] + H2O = L-tyrosyl-[protein] + phosphate. In terms of biological role, tyrosine protein phosphatase which functions as a dosage-dependent inducer of mitotic progression. Directly dephosphorylates CDK1 and stimulates its kinase activity. The sequence is that of M-phase inducer phosphatase 1-B (cdc25-1-b) from Xenopus laevis (African clawed frog).